Consider the following 1690-residue polypeptide: DNA-directed RNA polymerase subunit beta' (1690 aa).

C63, C65, C78, and C81 together coordinate Zn(2+). 3 residues coordinate Mg(2+): D753, D755, and D757. C1107, C1295, C1302, and C1305 together coordinate Zn(2+).

It belongs to the RNA polymerase beta' chain family. The RNAP catalytic core consists of 2 alpha, 1 beta, 1 beta' and 1 omega subunit. When a sigma factor is associated with the core the holoenzyme is formed, which can initiate transcription. It depends on Mg(2+) as a cofactor. Requires Zn(2+) as cofactor.

The catalysed reaction is RNA(n) + a ribonucleoside 5'-triphosphate = RNA(n+1) + diphosphate. Functionally, DNA-dependent RNA polymerase catalyzes the transcription of DNA into RNA using the four ribonucleoside triphosphates as substrates. In Thermotoga maritima (strain ATCC 43589 / DSM 3109 / JCM 10099 / NBRC 100826 / MSB8), this protein is DNA-directed RNA polymerase subunit beta'.